We begin with the raw amino-acid sequence, 147 residues long: Nucleoside diphosphate kinase (147 aa).

Positions 11, 59, 87, 93, 104, and 114 each coordinate ATP. Catalysis depends on H117, which acts as the Pros-phosphohistidine intermediate.

It belongs to the NDK family. Mg(2+) is required as a cofactor.

The protein localises to the cytoplasm. It catalyses the reaction a 2'-deoxyribonucleoside 5'-diphosphate + ATP = a 2'-deoxyribonucleoside 5'-triphosphate + ADP. The catalysed reaction is a ribonucleoside 5'-diphosphate + ATP = a ribonucleoside 5'-triphosphate + ADP. Major role in the synthesis of nucleoside triphosphates other than ATP. The ATP gamma phosphate is transferred to the NDP beta phosphate via a ping-pong mechanism, using a phosphorylated active-site intermediate. In Sulfurisphaera tokodaii (strain DSM 16993 / JCM 10545 / NBRC 100140 / 7) (Sulfolobus tokodaii), this protein is Nucleoside diphosphate kinase.